Here is a 330-residue protein sequence, read N- to C-terminus: MPLAAAVAASAVVPPRPPPPPPRRARPLRSFTGLILTRDLAALTVARCAPSPPAPAAEAEAEAVAVDEAPPAKPRPRRYPRQYPGEAVGVAEEMRFVAMRLRNPKRTTLKMDDTGAEEEVGDGVSEDASASEEEEEEEDDDDVVEEEEEGAGLEGEWMPSMEGFVKYLVDSKLVFDTVERIVAESTDVAYVYFRKSGLERSARITKDLEWFGGQGIAVPEPSTAGSTYATYLTELAESNAPAFLSHYYNIYFAHTTGGVAIGNKISKKILEGRELEFYKWDSDVELLLKDTREKLNELSKHWSRKDRNLCLKEAAKCFQHLGRIVRLIIL.

Composition is skewed to low complexity over residues 1-13 (MPLAAAVAASAVV) and 56-69 (AAEAEAEAVAVDEA). 3 disordered regions span residues 1 to 27 (MPLAAAVAASAVVPPRPPPPPPRRARP), 50 to 82 (PSPPAPAAEAEAEAVAVDEAPPAKPRPRRYPRQ), and 107 to 156 (TTLK…LEGE). The N-terminal 47 residues, 1 to 47 (MPLAAAVAASAVVPPRPPPPPPRRARPLRSFTGLILTRDLAALTVAR), are a transit peptide targeting the chloroplast. Positions 114-151 (TGAEEEVGDGVSEDASASEEEEEEEDDDDVVEEEEEGA) are enriched in acidic residues.

It belongs to the heme oxygenase family.

Its subcellular location is the plastid. It localises to the chloroplast. In terms of biological role, probable inactive heme oxygenase that may play a role in the regulation of phytochrome assembly and photomorphogenesis. The polypeptide is Probable inactive heme oxygenase 2, chloroplastic (HO2) (Oryza sativa subsp. japonica (Rice)).